The sequence spans 211 residues: Adenylate kinase (211 aa).

10 to 15 (GAGKGT) contributes to the ATP binding site. The tract at residues 30-59 (STGGILRAAIQKQTALGKKVQKVVEVGGLV) is NMP. AMP-binding positions include T31, R36, 57–59 (GLV), 85–88 (GFPR), and Q92. The LID stretch occupies residues 121–158 (GRRVCSACGSSYHVLFAQPKREGVCDRCRGVLVVREDD). R122 serves as a coordination point for ATP. Residues C125 and C128 each contribute to the Zn(2+) site. 131 to 132 (SY) contributes to the ATP binding site. 2 residues coordinate Zn(2+): C145 and C148. R155 and R166 together coordinate AMP. Position 194 (P194) interacts with ATP.

Belongs to the adenylate kinase family. As to quaternary structure, monomer.

The protein resides in the cytoplasm. The enzyme catalyses AMP + ATP = 2 ADP. It functions in the pathway purine metabolism; AMP biosynthesis via salvage pathway; AMP from ADP: step 1/1. Catalyzes the reversible transfer of the terminal phosphate group between ATP and AMP. Plays an important role in cellular energy homeostasis and in adenine nucleotide metabolism. This is Adenylate kinase from Treponema pallidum (strain Nichols).